Consider the following 103-residue polypeptide: Large ribosomal subunit protein bL21 (103 aa).

This sequence belongs to the bacterial ribosomal protein bL21 family. In terms of assembly, part of the 50S ribosomal subunit. Contacts protein L20.

In terms of biological role, this protein binds to 23S rRNA in the presence of protein L20. The polypeptide is Large ribosomal subunit protein bL21 (Borreliella afzelii (strain PKo) (Borrelia afzelii)).